Here is an 886-residue protein sequence, read N- to C-terminus: Isoleucine--tRNA ligase (886 aa).

The 'HIGH' region signature appears at 60–70 (PYANGDIHIGH). Residue glutamate 546 participates in L-isoleucyl-5'-AMP binding. A 'KMSKS' region motif is present at residues 587-591 (KMSKS). Residue lysine 590 coordinates ATP. Zn(2+) is bound by residues cysteine 856, cysteine 859, cysteine 870, and cysteine 873.

The protein belongs to the class-I aminoacyl-tRNA synthetase family. IleS type 1 subfamily. As to quaternary structure, monomer. It depends on Zn(2+) as a cofactor.

It localises to the cytoplasm. It catalyses the reaction tRNA(Ile) + L-isoleucine + ATP = L-isoleucyl-tRNA(Ile) + AMP + diphosphate. In terms of biological role, catalyzes the attachment of isoleucine to tRNA(Ile). As IleRS can inadvertently accommodate and process structurally similar amino acids such as valine, to avoid such errors it has two additional distinct tRNA(Ile)-dependent editing activities. One activity is designated as 'pretransfer' editing and involves the hydrolysis of activated Val-AMP. The other activity is designated 'posttransfer' editing and involves deacylation of mischarged Val-tRNA(Ile). In Mesomycoplasma hyopneumoniae (strain 232) (Mycoplasma hyopneumoniae), this protein is Isoleucine--tRNA ligase.